Reading from the N-terminus, the 600-residue chain is Epidermal growth factor receptor kinase substrate 8-like protein 3 (600 aa).

In terms of domain architecture, PTB spans 28-155 (QHRVEHLMTC…ALEEELEERP (128 aa)). Disordered stretches follow at residues 152-245 (EERP…PERD) and 429-452 (LHFPRDEPYNHNPEYEDSNLPLSS). Over residues 204-214 (SERSISPSSRS) the composition is skewed to low complexity. Ser238 bears the Phosphoserine mark. The region spanning 457 to 516 (RAALKMQVLYEFEARNAQELTVAQGEILEVLDQSKRWWLVKNEAGLTGYIPSNILEPLPA) is the SH3 domain.

Belongs to the EPS8 family. As to quaternary structure, interacts with ABI1. Part of a complex that contains SOS1, ABI1 and EPS8L2. Interacts with FASLG. As to expression, detected in embryonic gut. Detected in adult testis, placenta, adrenal gland and intestine.

Its subcellular location is the cytoplasm. This chain is Epidermal growth factor receptor kinase substrate 8-like protein 3 (Eps8l3), found in Mus musculus (Mouse).